A 404-amino-acid chain; its full sequence is MMVFAFWKVFLILNCLAGQVNMVQVTIPDTFVNVTVGSNVTLLCLYTTTVTSLEKLSIQWSFFHNKEMEPISIYYSEGGQASAIGQFKDRIIGATNPGNASITILHMQPADSGIYICDVNNPPDFFGKNQGILDVTVLVKPSKPFCSIQGRPEAGHPISLSCLSAFGTPSPVYYWYKIEGNTIVPVKESFNSATGVLDIGNLTNFEKGYYQCTAINSLGNSSCEIDLTSSDPEVGIIIGALVGALTGAAIIICVVYFARNKVKSKQKNLNSSTELEPMTKVHHSRQNEAIPAGGIQLEGTLPSSIHASHNTEPTTAVLEPEYEPNPPLETATQPDPEPEGSGPMPVPETEIQLQPEMELEPETEPEPEPEPEPQPELESELEPDPQSGVIVEPMREEEKETVKA.

The first 22 residues, 1–22 (MMVFAFWKVFLILNCLAGQVNM), serve as a signal peptide directing secretion. The region spanning 23 to 133 (VQVTIPDTFV…DFFGKNQGIL (111 aa)) is the Ig-like V-type domain. Residues 23-233 (VQVTIPDTFV…EIDLTSSDPE (211 aa)) are Extracellular-facing. A glycan (N-linked (GlcNAc...) asparagine) is linked at asparagine 39. Disulfide bonds link cysteine 44–cysteine 117 and cysteine 162–cysteine 212. The Ig-like C2-type domain occupies 141–228 (PSKPFCSIQG…GNSSCEIDLT (88 aa)). N-linked (GlcNAc...) asparagine glycosylation is found at asparagine 201 and asparagine 220. A helical membrane pass occupies residues 234–254 (VGIIIGALVGALTGAAIIICV). Residues 255–404 (VYFARNKVKS…REEEKETVKA (150 aa)) lie on the Cytoplasmic side of the membrane. Disordered stretches follow at residues 266–285 (QKNL…HHSR) and 298–404 (EGTL…TVKA). Phosphoserine occurs at positions 271 and 272. The segment covering 301 to 314 (LPSSIHASHNTEPT) has biased composition (polar residues). Residues 357-383 (MELEPETEPEPEPEPEPQPELESELEP) are compositionally biased toward acidic residues. Over residues 393-404 (PMREEEKETVKA) the composition is skewed to basic and acidic residues.

It localises to the membrane. This Rattus norvegicus (Rat) protein is V-set and immunoglobulin domain-containing protein 1 (Vsig1).